Here is a 66-residue protein sequence, read N- to C-terminus: ATP synthase F(0) complex subunit 8 (66 aa).

A helical membrane pass occupies residues 8–24 (TWLTMILSMFLVLFIIF). Lysine 54 is modified (N6-acetyllysine; alternate). Lysine 54 is subject to N6-succinyllysine; alternate. At lysine 57 the chain carries N6-acetyllysine.

This sequence belongs to the ATPase protein 8 family. As to quaternary structure, component of the ATP synthase complex composed at least of ATP5F1A/subunit alpha, ATP5F1B/subunit beta, ATP5MC1/subunit c (homooctomer), MT-ATP6/subunit a, MT-ATP8/subunit 8, ATP5ME/subunit e, ATP5MF/subunit f, ATP5MG/subunit g, ATP5MK/subunit k, ATP5MJ/subunit j, ATP5F1C/subunit gamma, ATP5F1D/subunit delta, ATP5F1E/subunit epsilon, ATP5PF/subunit F6, ATP5PB/subunit b, ATP5PD/subunit d, ATP5PO/subunit OSCP. ATP synthase complex consists of a soluble F(1) head domain (subunits alpha(3) and beta(3)) - the catalytic core - and a membrane F(0) domain - the membrane proton channel (subunits c, a, 8, e, f, g, k and j). These two domains are linked by a central stalk (subunits gamma, delta, and epsilon) rotating inside the F1 region and a stationary peripheral stalk (subunits F6, b, d, and OSCP). Interacts with PRICKLE3.

Its subcellular location is the mitochondrion membrane. In terms of biological role, subunit 8, of the mitochondrial membrane ATP synthase complex (F(1)F(0) ATP synthase or Complex V) that produces ATP from ADP in the presence of a proton gradient across the membrane which is generated by electron transport complexes of the respiratory chain. ATP synthase complex consist of a soluble F(1) head domain - the catalytic core - and a membrane F(1) domain - the membrane proton channel. These two domains are linked by a central stalk rotating inside the F(1) region and a stationary peripheral stalk. During catalysis, ATP synthesis in the catalytic domain of F(1) is coupled via a rotary mechanism of the central stalk subunits to proton translocation. In vivo, can only synthesize ATP although its ATP hydrolase activity can be activated artificially in vitro. Part of the complex F(0) domain. This is ATP synthase F(0) complex subunit 8 from Ovis aries (Sheep).